Here is a 367-residue protein sequence, read N- to C-terminus: 3-dehydroquinate synthase (367 aa).

NAD(+) is bound by residues 72–77 (DGENYK), 106–110 (GVIGD), 130–131 (TT), lysine 143, lysine 152, and 170–173 (FLST). Glutamate 185, histidine 248, and histidine 265 together coordinate Zn(2+).

This sequence belongs to the sugar phosphate cyclases superfamily. Dehydroquinate synthase family. Co(2+) is required as a cofactor. It depends on Zn(2+) as a cofactor. NAD(+) serves as cofactor.

It localises to the cytoplasm. The catalysed reaction is 7-phospho-2-dehydro-3-deoxy-D-arabino-heptonate = 3-dehydroquinate + phosphate. Its pathway is metabolic intermediate biosynthesis; chorismate biosynthesis; chorismate from D-erythrose 4-phosphate and phosphoenolpyruvate: step 2/7. Its function is as follows. Catalyzes the conversion of 3-deoxy-D-arabino-heptulosonate 7-phosphate (DAHP) to dehydroquinate (DHQ). This is 3-dehydroquinate synthase from Buchnera aphidicola subsp. Cinara cedri (strain Cc).